A 207-amino-acid polypeptide reads, in one-letter code: MTMDGDSSTTDASQLGISADYIGGSHYVIQPHDDTEDSMNDHEDTNGSKESFREQDIYLPIANVARIMKNAIPQTGKIAKDAKECVQECVSEFISFITSEASERCHQEKRKTINGEDILFAMSTLGFDSYVEPLKLYLQKFREAMKGEKGIGGAVTATDGLSEELTDEAFTNQLPAGLITADGQQQNVMVYTTSYQQISGVQQIQFS.

Residues 1–52 (MTMDGDSSTTDASQLGISADYIGGSHYVIQPHDDTEDSMNDHEDTNGSKESF) are a domain. The disordered stretch occupies residues 27–52 (YVIQPHDDTEDSMNDHEDTNGSKESF). The span at 39-52 (MNDHEDTNGSKESF) shows a compositional bias: basic and acidic residues. Residues 53 to 142 (REQDIYLPIA…PLKLYLQKFR (90 aa)) form a b domain region. The DNA-binding element occupies 59-65 (LPIANVA). The interval 86–97 (VQECVSEFISFI) is subunit association domain (SAD). A Glycyl lysine isopeptide (Lys-Gly) (interchain with G-Cter in ubiquitin) cross-link involves residue K140. The interval 143 to 207 (EAMKGEKGIG…ISGVQQIQFS (65 aa)) is c domain.

It belongs to the NFYB/HAP3 subunit family. Heterotrimeric transcription factor composed of three components, NF-YA, NF-YB and NF-YC. NF-YB and NF-YC must interact and dimerize for NF-YA association and DNA binding. Interacts with C1QBP. In terms of processing, monoubiquitination at Lys-140 plays an important role in transcriptional activation by allowing the deposition of histone H3 methylations as well as histone H2B monoubiquitination at 'Lys-121'.

Its subcellular location is the nucleus. Component of the sequence-specific heterotrimeric transcription factor (NF-Y) which specifically recognizes a 5'-CCAAT-3' box motif found in the promoters of its target genes. NF-Y can function as both an activator and a repressor, depending on its interacting cofactors. This chain is Nuclear transcription factor Y subunit beta (NFYB), found in Bos taurus (Bovine).